The sequence spans 618 residues: Matrix metalloproteinase-24 (618 aa).

The first 41 residues, 1–41, serve as a signal peptide directing secretion; the sequence is MPRSRGGRAAPGQAARWSGWRAPGRLLPLLPALCCLAAAAG. Positions 42–128 are excised as a propeptide; that stretch reads AGKPAGADAP…HLSRRRRNKR (87 aa). The Extracellular segment spans residues 42–575; sequence AGKPAGADAP…IDDVPGSVNA (534 aa). The Cysteine switch signature appears at 110-117; the sequence is PRCGVPDH. The Zn(2+) site is built by Cys-112 and His-255. Glu-256 is an active-site residue. Positions 259 and 265 each coordinate Zn(2+). The tract at residues 296-352 is disordered; the sequence is QKIYGPPAEPLEPTRPLPTLPVRRIHSPSERKHERQPRPPRPPLGDRPSTPGAKPNI. Residues 302 to 314 show a composition bias toward pro residues; it reads PAEPLEPTRPLPT. Over residues 322–332 the composition is skewed to basic and acidic residues; sequence SPSERKHERQP. 4 Hemopexin repeats span residues 350-398, 399-444, 446-494, and 495-542; these read PNIC…WKGL, PARI…GSCL, REGI…KGIP, and QAPQ…WMGC. Residues Cys-353 and Cys-542 are joined by a disulfide bond. A helical membrane pass occupies residues 576-596; the sequence is VAVVVPCTLSLCLLVLLYTIF. Residues 597–618 lie on the Cytoplasmic side of the membrane; sequence QFKNKTGPQPVTYYKRPVQEWV. Residues 616–618 carry the PDZ-binding motif; that stretch reads EWV.

This sequence belongs to the peptidase M10A family. Interacts (via PDZ-binding motif) with APBA3 (via PDZ domain). Interacts with GRIP1 and GRIP2. Zn(2+) serves as cofactor. It depends on Ca(2+) as a cofactor. Post-translationally, cleaved by a furin endopeptidase in the trans-Golgi network. As to expression, predominantly expressed in the nervous system: while enriched in the central nervous system, expression is also detected in the peripheral nervous system, including the trigeminal ganglion. Expression is not restricted to the nervous system: it is also enriched in the thymus, with a lower level of expression present in the aorta. In brain, high expression is present in the brain parenchyma, particularly within the neocortex.

The protein localises to the cell membrane. It localises to the golgi apparatus. The protein resides in the trans-Golgi network membrane. It is found in the secreted. Its subcellular location is the extracellular space. The protein localises to the extracellular matrix. Functionally, metalloprotease that mediates cleavage of N-cadherin (CDH2) and acts as a regulator of neuro-immune interactions and neural stem cell quiescence. Involved in cell-cell interactions between nociceptive neurites and mast cells, possibly by mediating cleavage of CDH2, thereby acting as a mediator of peripheral thermal nociception and inflammatory hyperalgesia. Key regulator of neural stem cells quiescence by mediating cleavage of CDH2, affecting CDH2-mediated anchorage of neural stem cells to ependymocytes in the adult subependymal zone, leading to modulate their quiescence. May play a role in axonal growth. Able to activate progelatinase A. May also be a proteoglycanase involved in degradation of proteoglycans, such as dermatan sulfate and chondroitin sulfate proteoglycans. Cleaves partially fibronectin, but not collagen type I, nor laminin. The protein is Matrix metalloproteinase-24 (Mmp24) of Rattus norvegicus (Rat).